The chain runs to 631 residues: tRNA uridine 5-carboxymethylaminomethyl modification enzyme MnmG (631 aa).

15 to 20 (GAGHAG) is an FAD binding site. Residues 203 to 232 (TPPRVDGNTVDYSKTQEEPGDKEPRHFSYT) form a disordered region. A compositionally biased stretch (basic and acidic residues) spans 216 to 232 (KTQEEPGDKEPRHFSYT). Residue 276–290 (GPRYCPSIEDKVVRF) coordinates NAD(+).

It belongs to the MnmG family. In terms of assembly, homodimer. Heterotetramer of two MnmE and two MnmG subunits. FAD serves as cofactor.

It is found in the cytoplasm. NAD-binding protein involved in the addition of a carboxymethylaminomethyl (cmnm) group at the wobble position (U34) of certain tRNAs, forming tRNA-cmnm(5)s(2)U34. The chain is tRNA uridine 5-carboxymethylaminomethyl modification enzyme MnmG from Lactobacillus gasseri (strain ATCC 33323 / DSM 20243 / BCRC 14619 / CIP 102991 / JCM 1131 / KCTC 3163 / NCIMB 11718 / NCTC 13722 / AM63).